We begin with the raw amino-acid sequence, 126 residues long: Prostate and testis expressed protein 1 (126 aa).

The first 21 residues, 1 to 21 (MDKSLLLELPILLCCFRALSG), serve as a signal peptide directing secretion. One can recognise a UPAR/Ly6 domain in the interval 46–125 (VQCRMCHLQF…CRSHDLCNED (80 aa)). Disulfide bonds link C48/C75, C51/C60, C67/C94, and C98/C115.

Belongs to the PATE family. Expressed specifically in prostate cancer, normal prostate, and testis. Expressed in the epithelial cells of the prostate cancer and normal prostate tissues.

It localises to the secreted. The sequence is that of Prostate and testis expressed protein 1 (PATE1) from Homo sapiens (Human).